A 417-amino-acid chain; its full sequence is Dibenzothiophene monooxygenase (417 aa).

FMN is bound by residues Y96, N129–N134, K159–S163, R282, A369–R370, and H391. The lid loop stretch occupies residues S131–K142.

The protein belongs to the DszC flavin monooxygenase family. Homotetramer. Homodimer. Requires FAD as cofactor. It depends on NADH as a cofactor.

It localises to the cytoplasm. The catalysed reaction is dibenzothiophene + 2 FMNH2 + 2 O2 = dibenzothiophene 5,5-dioxide + 2 FMN + 2 H2O + 2 H(+). It carries out the reaction dibenzothiophene + FMNH2 + O2 = dibenzothiophene 5-oxide + FMN + H2O + H(+). It catalyses the reaction dibenzothiophene 5-oxide + FMNH2 + O2 = dibenzothiophene 5,5-dioxide + FMN + H2O + H(+). The protein operates within sulfur metabolism; dibenzothiophene degradation. Functionally, catalyzes the first step of the '4S' desulfurization pathway that removes covalently bound sulfur from dibenzothiophene (DBT) without breaking carbon-carbon bonds. Sulfur dioxygenase which converts DBT to DBT-sulfone (DBTO2 or DBT 5,5-dioxide) in a stepwise manner. In DBTO (dibenzothiophene-5-oxide) was reported not to be a substrate, in it is reported to be a substrate. Can also use benzyl sulfide and benzyl sulfoxide as substrates, although benzyl sulfoxide is a poor substrate. The pathway substrate specificity has been augmented using mutagenesis, however no mutations allowed use of alkylated thiophenes. The sequence is that of Dibenzothiophene monooxygenase from Rhodococcus qingshengii.